A 430-amino-acid chain; its full sequence is Ribosomal protein uS12 methylthiotransferase RimO (430 aa).

The region spanning 2–119 (ISVYSISLGC…WPAMLAHALK (118 aa)) is the MTTase N-terminal domain. 6 residues coordinate [4Fe-4S] cluster: C11, C46, C81, C145, C149, and C152. The region spanning 131 to 361 (STGPSYAWLK…MEVQAEISEE (231 aa)) is the Radical SAM core domain. The TRAM domain occupies 364–430 (AVHEGTRQQV…TRTYDLVALA (67 aa)).

It belongs to the methylthiotransferase family. RimO subfamily. It depends on [4Fe-4S] cluster as a cofactor.

Its subcellular location is the cytoplasm. The catalysed reaction is L-aspartate(89)-[ribosomal protein uS12]-hydrogen + (sulfur carrier)-SH + AH2 + 2 S-adenosyl-L-methionine = 3-methylsulfanyl-L-aspartate(89)-[ribosomal protein uS12]-hydrogen + (sulfur carrier)-H + 5'-deoxyadenosine + L-methionine + A + S-adenosyl-L-homocysteine + 2 H(+). Catalyzes the methylthiolation of an aspartic acid residue of ribosomal protein uS12. The sequence is that of Ribosomal protein uS12 methylthiotransferase RimO from Nitratidesulfovibrio vulgaris (strain ATCC 29579 / DSM 644 / CCUG 34227 / NCIMB 8303 / VKM B-1760 / Hildenborough) (Desulfovibrio vulgaris).